The sequence spans 433 residues: KH domain-containing, RNA-binding, signal transduction-associated protein 1 (433 aa).

A disordered region spans residues 1–79 (MQRRDDSSAR…PLLPGGAVKM (79 aa)). Residues 41–76 (GAQHPQPLLTGGAAAGSSGAQGPAAANPAPLLPGGA) show a composition bias toward low complexity. The involved in homodimerization stretch occupies residues 82–243 (ENKYLPELMA…VKKFLVPDMM (162 aa)). A KH domain is found at 171 to 197 (QEETGAKISVLGKGSMRDKAKEEELRK). Disordered stretches follow at residues 259–305 (GVPE…ALVR), 317–351 (AAVARGVPPPPAVRGAPAPRARAAGIQRIPLPPPP), and 403–433 (QDDWNGTRPSLKAPPARPVKGAYREHPYGRY). The segment covering 277–300 (APPPPPPVPRGRGVGPPPPPPPPR) has biased composition (pro residues). Low complexity predominate over residues 329 to 342 (VRGAPAPRARAAGI). The span at 424–433 (AYREHPYGRY) shows a compositional bias: basic and acidic residues.

It belongs to the KHDRBS family. As to quaternary structure, self-associates to form homooligomers when bound to RNA, oligomerization appears to be limited when binding to proteins. Post-translationally, tyrosine phosphorylated by several non-receptor tyrosine kinases including LCK, FYN and JAK3. In terms of processing, acetylated. Positively correlates with ability to bind RNA. Methylated by HRMT1L2. Required for nuclear localization.

Its subcellular location is the nucleus. The protein localises to the cytoplasm. It is found in the membrane. Its function is as follows. Recruited and tyrosine phosphorylated by several receptor systems, for example the T-cell, leptin and insulin receptors. Once phosphorylated, functions as an adapter protein in signal transduction cascades by binding to SH2 and SH3 domain-containing proteins. Role in G2-M progression in the cell cycle. Represses CBP-dependent transcriptional activation apparently by competing with other nuclear factors for binding to CBP. Also acts as a putative regulator of mRNA stability and/or translation rates and mediates mRNA nuclear export. Plays a role in the regulation of alternative splicing and influences mRNA splice site selection and exon inclusion. The chain is KH domain-containing, RNA-binding, signal transduction-associated protein 1 from Gallus gallus (Chicken).